The chain runs to 110 residues: Putative membrane protein insertion efficiency factor (110 aa).

Belongs to the UPF0161 family.

Its subcellular location is the cell inner membrane. Functionally, could be involved in insertion of integral membrane proteins into the membrane. In Campylobacter hominis (strain ATCC BAA-381 / DSM 21671 / CCUG 45161 / LMG 19568 / NCTC 13146 / CH001A), this protein is Putative membrane protein insertion efficiency factor.